The primary structure comprises 450 residues: Divalent metal cation transporter MntH (450 aa).

11 consecutive transmembrane segments (helical) span residues 34–54 (LSFLGPGLLVAVGYMDPGNWI), 61–81 (AQYGYTLLFVILISSLSAMLL), 108–128 (IAIIFWIIAELAIIATDIAEV), 141–161 (IPLIVGALITVLDVFLLLFIM), 170–190 (AIVGTLIFTVLFIFIFEVYIS), 212–232 (GILYIALGIIGATIMPHNLYL), 263–283 (IQLSIAFVVNCLLLVLGASLF), 305–325 (PVLGATMGAIMSTLFAVALLA), 361–381 (SLAVIPVIVCLSIFKGNAAKI), 383–403 (QLLVFSQVFLSIALPFCLIPL), and 422–442 (VNIISWTLIIILSILNVYLIV).

It belongs to the NRAMP family.

The protein localises to the cell membrane. Its function is as follows. H(+)-stimulated, divalent metal cation uptake system. The polypeptide is Divalent metal cation transporter MntH (Staphylococcus aureus (strain bovine RF122 / ET3-1)).